Consider the following 38-residue polypeptide: Large ribosomal subunit protein bL36 (38 aa).

This sequence belongs to the bacterial ribosomal protein bL36 family.

The sequence is that of Large ribosomal subunit protein bL36 from Anaeromyxobacter dehalogenans (strain 2CP-1 / ATCC BAA-258).